The sequence spans 257 residues: Flap endonuclease Xni (257 aa).

Residue aspartate 109 coordinates Mg(2+). Residues valine 165 to glutamate 254 form the 5'-3' exonuclease domain. Residues leucine 176, proline 185, isoleucine 187, and isoleucine 190 each contribute to the K(+) site. The tract at residues glycine 189–alanine 194 is interaction with DNA.

It belongs to the Xni family. It depends on Mg(2+) as a cofactor. K(+) is required as a cofactor.

Functionally, has flap endonuclease activity. During DNA replication, flap endonucleases cleave the 5'-overhanging flap structure that is generated by displacement synthesis when DNA polymerase encounters the 5'-end of a downstream Okazaki fragment. The sequence is that of Flap endonuclease Xni from Vibrio atlanticus (strain LGP32) (Vibrio splendidus (strain Mel32)).